Here is a 469-residue protein sequence, read N- to C-terminus: Mitochondrial adenyl nucleotide antiporter SLC25A25 (469 aa).

Residues 1-165 (MLCLCLYVPI…LYWKHSTIFD (165 aa)) form a regulatory N-terminal domain region. The Mitochondrial intermembrane segment spans residues 1–189 (MLCLCLYVPI…ERQTGMWWRH (189 aa)). EF-hand domains lie at 47-80 (TYRQ…QDHE), 78-113 (DHEK…LGVK), and 114-149 (ISEQ…HPVE). Residues Asp60, Asp62, Asp64, Gln66, and Glu71 each contribute to the Ca(2+) site. Positions 151-160 (IPEIILYWKH) are linker region. Positions 166-469 (VGENLTVPDE…LKITLGVQSR (304 aa)) are C-terminal transmembrane transporter domain. Solcar repeat units follow at residues 184 to 270 (GMWW…MKRL), 278 to 363 (LRIH…LKNT), and 375 to 463 (PGVF…LKIT). A helical membrane pass occupies residues 190–207 (LVAGGGAGAVSRTCTAPL). Over 208–244 (DRLKVLMQVHASRSNNMCIVGGFTQMIREGGAKSLWR) the chain is Mitochondrial matrix. Residues 245–264 (GNGINVLKIAPESAIKFMAY) traverse the membrane as a helical segment. Topologically, residues 265-287 (EQMKRLVGSDQETLRIHERLVAG) are mitochondrial intermembrane. A helical transmembrane segment spans residues 288–301 (SLAGAIAQSSIYPM). The Mitochondrial matrix portion of the chain corresponds to 302–337 (EVLKTRMALRKTGQYSGMLDCARRILAKEGVAAFYK). Residues 338–357 (GYIPNMLGIIPYAGIDLAVY) traverse the membrane as a helical segment. Residues 358–380 (ETLKNTWLQRYAVNSADPGVFVL) are Mitochondrial intermembrane-facing. The chain crosses the membrane as a helical span at residues 381–398 (LACGTISSTCGQLASYPL). At 399-437 (ALVRTRMQAQASIEGAPEVTMSSLFKQILRTEGAFGLYR) the chain is on the mitochondrial matrix side. Residues 438–457 (GLAPNFMKVIPAVSISYVVY) traverse the membrane as a helical segment. At 458-469 (ENLKITLGVQSR) the chain is on the mitochondrial intermembrane side.

The protein belongs to the mitochondrial carrier (TC 2.A.29) family.

It is found in the mitochondrion inner membrane. It carries out the reaction Mg(2+)(out) + phosphate(in) + ATP(out) = Mg(2+)(in) + phosphate(out) + ATP(in). Activated by an increase in cytosolic calcium levels that induce a conformational change of the N-terminal regulatory domain, uncapping the channel and allowing transport. In terms of biological role, electroneutral antiporter that most probably mediates the transport of adenyl nucleotides through the inner mitochondrial membrane. Originally identified as an ATP-magnesium/inorganic phosphate antiporter, it could have a broader specificity for adenyl nucleotides. By regulating the mitochondrial matrix adenyl nucleotide pool could adapt to changing cellular energetic demands and indirectly regulate adenyl nucleotide-dependent metabolic pathways. This is Mitochondrial adenyl nucleotide antiporter SLC25A25 from Mus musculus (Mouse).